Reading from the N-terminus, the 452-residue chain is Trigger factor (452 aa).

Residues glycine 171 to alanine 256 enclose the PPIase FKBP-type domain.

It belongs to the FKBP-type PPIase family. Tig subfamily.

It is found in the cytoplasm. It carries out the reaction [protein]-peptidylproline (omega=180) = [protein]-peptidylproline (omega=0). Involved in protein export. Acts as a chaperone by maintaining the newly synthesized protein in an open conformation. Functions as a peptidyl-prolyl cis-trans isomerase. The sequence is that of Trigger factor from Afipia carboxidovorans (strain ATCC 49405 / DSM 1227 / KCTC 32145 / OM5) (Oligotropha carboxidovorans).